We begin with the raw amino-acid sequence, 130 residues long: Small ribosomal subunit protein uS9 (130 aa).

The protein belongs to the universal ribosomal protein uS9 family.

The chain is Small ribosomal subunit protein uS9 (rpsI) from Geobacillus stearothermophilus (Bacillus stearothermophilus).